Consider the following 249-residue polypeptide: NADH dehydrogenase [ubiquinone] flavoprotein 2, mitochondrial (249 aa).

A mitochondrion-targeting transit peptide spans 1–32 (MFFSAALRARAAGLTAQWGRHVRNLHKTAMQN). Lysine 61 bears the N6-acetyllysine mark. The [2Fe-2S] cluster site is built by cysteine 135, cysteine 140, cysteine 176, and cysteine 180. The residue at position 193 (tyrosine 193) is a Phosphotyrosine; by SRC. Residues 213–249 (IPKPGPRSGRFSCEPAGGLTSLTEPPKGPGFGVQAGL) are disordered.

Belongs to the complex I 24 kDa subunit family. Core subunit of respiratory chain NADH dehydrogenase (Complex I) which is composed of 45 different subunits. This is a component of the flavoprotein-sulfur (FP) fragment of the enzyme. Requires [2Fe-2S] cluster as cofactor.

Its subcellular location is the mitochondrion inner membrane. The catalysed reaction is a ubiquinone + NADH + 5 H(+)(in) = a ubiquinol + NAD(+) + 4 H(+)(out). Functionally, core subunit of the mitochondrial membrane respiratory chain NADH dehydrogenase (Complex I) which catalyzes electron transfer from NADH through the respiratory chain, using ubiquinone as an electron acceptor. Parts of the peripheral arm of the enzyme, where the electrons from NADH are accepted by flavin mononucleotide (FMN) and then passed along a chain of iron-sulfur clusters by electron tunnelling to the final acceptor ubiquinone. Contains one iron-sulfur cluster. The polypeptide is NADH dehydrogenase [ubiquinone] flavoprotein 2, mitochondrial (Gorilla gorilla gorilla (Western lowland gorilla)).